The chain runs to 179 residues: MNDIISKINPFSSIPKHQIAQQIVNFGLIVATALMIWKGLMIFSGSESPIVVVLSGSMIPAFFRGDLLYLNMEDGPFRVGEIVVFKIEGKEIPIVHRILQIHEKEDGLYDIRTKGDNNNVDDVGLYSPGQRWLSRDHIIGRAKGFLPSVGMVTIVMHDYPQLKFFLVFVLAVFVLSTRE.

The Cytoplasmic portion of the chain corresponds to 1 to 22 (MNDIISKINPFSSIPKHQIAQQ). Residues 23 to 43 (IVNFGLIVATALMIWKGLMIF) form a helical; Signal-anchor for type II membrane protein membrane-spanning segment. The Lumenal portion of the chain corresponds to 44–179 (SGSESPIVVV…LAVFVLSTRE (136 aa)). Residues Ser-57, His-96, and Asp-122 each act as charge relay system in the active site. The interval 165–176 (FLVFVLAVFVLS) is C-terminal short (CTS) helix.

The protein belongs to the peptidase S26B family. In terms of assembly, component of the signal peptidase complex (SPC) composed of a catalytic subunit sec11 and three accessory subunits spcs1, spcs2 and spcs3. The complex induces a local thinning of the ER membrane which is used to measure the length of the signal peptide (SP) h-region of protein substrates. This ensures the selectivity of the complex towards h-regions shorter than 18-20 amino acids.

The protein localises to the endoplasmic reticulum membrane. It catalyses the reaction Cleavage of hydrophobic, N-terminal signal or leader sequences from secreted and periplasmic proteins.. In terms of biological role, catalytic component of the signal peptidase complex (SPC) which catalyzes the cleavage of N-terminal signal sequences from nascent proteins as they are translocated into the lumen of the endoplasmic reticulum. Specifically cleaves N-terminal signal peptides that contain a hydrophobic alpha-helix (h-region) shorter than 18-20 amino acids. The sequence is that of Signal peptidase complex catalytic subunit sec11 (sec11) from Dictyostelium discoideum (Social amoeba).